The chain runs to 301 residues: NTE family protein RssA (301 aa).

The region spanning 8 to 168 (LALGSGAARG…VNPIPISLTR (161 aa)) is the PNPLA domain. The GXSXG motif lies at 39-43 (GCSIG). S41 serves as the catalytic Nucleophile. D155 acts as the Proton acceptor in catalysis. Residues 155 to 157 (DGA) carry the DGA/G motif.

It belongs to the NTE family.

This Escherichia coli (strain K12) protein is NTE family protein RssA (rssA).